Here is a 135-residue protein sequence, read N- to C-terminus: uncharacterized protein (135 aa).

This is an uncharacterized protein from Magallana gigas (Pacific oyster).